We begin with the raw amino-acid sequence, 356 residues long: Icosanoyl-CoA 5-desaturase (356 aa).

The helical transmembrane segment at 5–25 threads the bilayer; that stretch reads LYFPISISLSLSLEAMASFIA. Positions 38–58 are disordered; that stretch reads LDPKIPTKPEPKTETPKPKDD. The span at 42–58 shows a compositional bias: basic and acidic residues; the sequence is IPTKPEPKTETPKPKDD. A run of 2 helical transmembrane segments spans residues 88-108 and 111-131; these read NAVT…YFSW and FWIS…TLCF. A Histidine box-1 motif is present at residues 132 to 137; it reads HRCLTH. Positions 169 to 173 match the Histidine box-2 motif; sequence HRYHH. Residues 236-256 traverse the membrane as a helical segment; it reads ALIALLYYVGGFPYIVWGMGF. The short motif at 302 to 306 is the Histidine box-3 element; sequence HNNHH.

It belongs to the fatty acid desaturase type 1 family. Fe(2+) serves as cofactor.

It is found in the membrane. The catalysed reaction is eicosanoyl-CoA + 2 Fe(II)-[cytochrome b5] + O2 + 2 H(+) = (5Z)-eicosenoyl-CoA + 2 Fe(III)-[cytochrome b5] + 2 H2O. Its pathway is lipid metabolism; monounsaturated fatty acid biosynthesis. Desaturase involved in the biosynthesis of (5Z)-icos-5-enoate, an unusual monounsaturated fatty acid that makes up to 60% of the total fatty acids in Limnanthes sp. seed oil. Only acts on saturated fatty acids. In Limnanthes douglasii (Douglas' meadowfoam), this protein is Icosanoyl-CoA 5-desaturase.